We begin with the raw amino-acid sequence, 493 residues long: uncharacterized protein (493 aa).

A helical transmembrane segment spans residues 10–30; the sequence is LVPSTRFALSLVMFFGCLVTY. N-linked (GlcNAc...) asparagine glycosylation is found at asparagine 35, asparagine 47, and asparagine 69. Transmembrane regions (helical) follow at residues 85-105, 112-132, 144-164, 175-195, 205-225, and 272-292; these read MVLS…GHLA, RVVF…PVAA, AAIG…WSVW, GVTY…SGFL, PSIF…WWYV, and AVWA…TMLV. Asparagine 305 carries an N-linked (GlcNAc...) asparagine glycan. Helical transmembrane passes span 311-331, 348-368, 375-395, and 406-426; these read AVAS…GVLA, AAML…GYCG, VIIF…GFVV, and GTVM…SPAV. N-linked (GlcNAc...) asparagine glycosylation occurs at asparagine 433. A helical membrane pass occupies residues 441–461; it reads MVLWLTAGILTIGALLFSIFA.

Belongs to the major facilitator superfamily. Sodium/anion cotransporter family.

The protein resides in the membrane. This is an uncharacterized protein from Caenorhabditis elegans.